Here is a 328-residue protein sequence, read N- to C-terminus: Homeobox protein Hox-C13 (328 aa).

Residues 23 to 48 form a disordered region; the sequence is AAESGSGGGGGGGGAGGAGGGCSGAS. Residues 27 to 45 show a composition bias toward gly residues; sequence GSGGGGGGGGAGGAGGGCS. Residues 258–317 constitute a DNA-binding region (homeobox); sequence GRKKRVPYTKVQLKELEKEYAASKFITKEKRRRISATTNLSERQVTIWFQNRRVKEKKVV.

Belongs to the Abd-B homeobox family. Expressed in differentiating keratinocytes. In the hair follicle lower matrix, expressed in all 3 hair shaft-forming compartments, i.e. cuticle, cortex and medulla. Expression stops sharply at the boundary with the germinal matrix compartment.

The protein resides in the nucleus. Functionally, transcription factor which plays a role in hair follicle differentiation. Regulates FOXQ1 expression and that of other hair-specific genes. This chain is Homeobox protein Hox-C13 (Hoxc13), found in Mus musculus (Mouse).